We begin with the raw amino-acid sequence, 196 residues long: DnaA initiator-associating protein DiaA (196 aa).

The region spanning Met34–Asp196 is the SIS domain.

Belongs to the SIS family. DiaA subfamily. Homotetramer; dimer of dimers.

Its function is as follows. Required for the timely initiation of chromosomal replication via direct interactions with the DnaA initiator protein. The polypeptide is DnaA initiator-associating protein DiaA (Photorhabdus laumondii subsp. laumondii (strain DSM 15139 / CIP 105565 / TT01) (Photorhabdus luminescens subsp. laumondii)).